The sequence spans 308 residues: Ribosomal protein L11 methyltransferase (308 aa).

S-adenosyl-L-methionine is bound by residues threonine 148, glycine 169, aspartate 191, and asparagine 239.

Belongs to the methyltransferase superfamily. PrmA family.

It localises to the cytoplasm. The catalysed reaction is L-lysyl-[protein] + 3 S-adenosyl-L-methionine = N(6),N(6),N(6)-trimethyl-L-lysyl-[protein] + 3 S-adenosyl-L-homocysteine + 3 H(+). Its function is as follows. Methylates ribosomal protein L11. This Psychrobacter cryohalolentis (strain ATCC BAA-1226 / DSM 17306 / VKM B-2378 / K5) protein is Ribosomal protein L11 methyltransferase.